A 517-amino-acid polypeptide reads, in one-letter code: GMP synthase [glutamine-hydrolyzing] (517 aa).

Residues K4 to D193 form the Glutamine amidotransferase type-1 domain. The Nucleophile role is filled by C79. Active-site residues include H167 and E169. Positions W194 to R382 constitute a GMPS ATP-PPase domain. Residue S221 to S227 participates in ATP binding.

As to quaternary structure, homodimer.

The catalysed reaction is XMP + L-glutamine + ATP + H2O = GMP + L-glutamate + AMP + diphosphate + 2 H(+). It participates in purine metabolism; GMP biosynthesis; GMP from XMP (L-Gln route): step 1/1. Functionally, catalyzes the synthesis of GMP from XMP. The protein is GMP synthase [glutamine-hydrolyzing] of Phocaeicola vulgatus (strain ATCC 8482 / DSM 1447 / JCM 5826 / CCUG 4940 / NBRC 14291 / NCTC 11154) (Bacteroides vulgatus).